The primary structure comprises 891 residues: MSGVNDIRSAFLNYFAANGHQIVPSSPLVPRNDPTLMFTNAGMVQFKNVFTGVEKRPYQRATTSQKCVRAGGKHNDLDNVGYTARHHTFFEMLGNFSFGDYFKDRAIELAWKLVTQEFGLPKDRLTATVYIDDDGAFDLWKKIAGLPESRIIRIAGSDNFWQMGDTGPCGPCSEIFYDHGDRIPGGPPGSPEQDGDRFVEIWNLVFMQYEKLPDGSRPNLPKPSIDTGAGLERVAAVLQGKHDNYDIDLFVALIRAAADLTGADPQGPMKASLRVIADHLRASSFLIADGVLPSNEGRGYVLRRIMRRAMRHAQLLGAREPLMWRLVGVLVREMGEAFPELQRARPLIEETLRLEETRFRKTLERGLSILDEKSASLKQGDMFDGETAFTLYDTYGFPLDLTQDALRARGIGVDLASFTDAMEQQKAKARASWSGSGEAAAESIWFPLREKLGATEFLGYETEAAEGVVAALVKDGEEADTLKAGESGAIVLNQTPFYGESGGQVGDTGFLIADGVRFRVTDTQKKAGDLFVHLGTVEQGVLAPGMALALEVDHDRRSAIRANHSATHLLHEALRQVLGDHIAQRGSLVAPERLRFDFAHNKPISADELRCIEDIANDVVLENGEVTTRLMAVDDAREAGARALFGEKYGDEVRVVSMGGTDRHGAASNALGWSVELCGGTHVKRTGDIGLISVVGESAVASGVRRIEALTGHQARHHANHAIQLAKTAAGELRTSLDDMPARIASLMEERKKLERELSEARKKLAMGGAASASSGATTGVRDVGGIKLMARSVEGIEIKDLKSLADQGKKQLGSGVVALVATSGDGKASVVVGVTPDLVTRFSAVDLVRKASEVLGGKGGGGKPDMAQAGGPDGAKAGAALDAIAAAMGA.

4 residues coordinate Zn(2+): His-564, His-568, Cys-678, and His-682.

This sequence belongs to the class-II aminoacyl-tRNA synthetase family. Zn(2+) serves as cofactor.

It localises to the cytoplasm. It carries out the reaction tRNA(Ala) + L-alanine + ATP = L-alanyl-tRNA(Ala) + AMP + diphosphate. Functionally, catalyzes the attachment of alanine to tRNA(Ala) in a two-step reaction: alanine is first activated by ATP to form Ala-AMP and then transferred to the acceptor end of tRNA(Ala). Also edits incorrectly charged Ser-tRNA(Ala) and Gly-tRNA(Ala) via its editing domain. This chain is Alanine--tRNA ligase, found in Nitrobacter winogradskyi (strain ATCC 25391 / DSM 10237 / CIP 104748 / NCIMB 11846 / Nb-255).